Reading from the N-terminus, the 193-residue chain is Recombination protein RecR (193 aa).

A C4-type zinc finger spans residues 61–76 (CSSCNALSESEVCEIC). The 87-residue stretch at 84-170 (SQLCMVLHPR…TFTKIAQGVP (87 aa)) folds into the Toprim domain.

This sequence belongs to the RecR family.

Functionally, may play a role in DNA repair. It seems to be involved in an RecBC-independent recombinational process of DNA repair. It may act with RecF and RecO. In Helicobacter pylori (strain G27), this protein is Recombination protein RecR.